An 87-amino-acid polypeptide reads, in one-letter code: Small ribosomal subunit protein uS17 (87 aa).

It belongs to the universal ribosomal protein uS17 family. In terms of assembly, part of the 30S ribosomal subunit.

One of the primary rRNA binding proteins, it binds specifically to the 5'-end of 16S ribosomal RNA. The polypeptide is Small ribosomal subunit protein uS17 (Geobacillus thermodenitrificans (strain NG80-2)).